A 94-amino-acid chain; its full sequence is DNA-directed RNA polymerase subunit omega (94 aa).

Belongs to the RNA polymerase subunit omega family. In terms of assembly, the RNAP catalytic core consists of 2 alpha, 1 beta, 1 beta' and 1 omega subunit. When a sigma factor is associated with the core the holoenzyme is formed, which can initiate transcription.

It catalyses the reaction RNA(n) + a ribonucleoside 5'-triphosphate = RNA(n+1) + diphosphate. Its function is as follows. Promotes RNA polymerase assembly. Latches the N- and C-terminal regions of the beta' subunit thereby facilitating its interaction with the beta and alpha subunits. The chain is DNA-directed RNA polymerase subunit omega from Bifidobacterium longum subsp. infantis (strain ATCC 15697 / DSM 20088 / JCM 1222 / NCTC 11817 / S12).